The sequence spans 425 residues: Serine--tRNA ligase (425 aa).

230-232 provides a ligand contact to L-serine; sequence TAE. 261–263 lines the ATP pocket; that stretch reads RSE. Glu284 is an L-serine binding site. 348–351 contributes to the ATP binding site; that stretch reads EISS. Position 383 (Ser383) interacts with L-serine.

It belongs to the class-II aminoacyl-tRNA synthetase family. Type-1 seryl-tRNA synthetase subfamily. In terms of assembly, homodimer. The tRNA molecule binds across the dimer.

The protein resides in the cytoplasm. It catalyses the reaction tRNA(Ser) + L-serine + ATP = L-seryl-tRNA(Ser) + AMP + diphosphate + H(+). The enzyme catalyses tRNA(Sec) + L-serine + ATP = L-seryl-tRNA(Sec) + AMP + diphosphate + H(+). It functions in the pathway aminoacyl-tRNA biosynthesis; selenocysteinyl-tRNA(Sec) biosynthesis; L-seryl-tRNA(Sec) from L-serine and tRNA(Sec): step 1/1. In terms of biological role, catalyzes the attachment of serine to tRNA(Ser). Is also able to aminoacylate tRNA(Sec) with serine, to form the misacylated tRNA L-seryl-tRNA(Sec), which will be further converted into selenocysteinyl-tRNA(Sec). The protein is Serine--tRNA ligase of Ligilactobacillus salivarius (strain UCC118) (Lactobacillus salivarius).